A 141-amino-acid chain; its full sequence is Large ribosomal subunit protein uL11 (141 aa).

Belongs to the universal ribosomal protein uL11 family. In terms of assembly, part of the ribosomal stalk of the 50S ribosomal subunit. Interacts with L10 and the large rRNA to form the base of the stalk. L10 forms an elongated spine to which L12 dimers bind in a sequential fashion forming a multimeric L10(L12)X complex. In terms of processing, one or more lysine residues are methylated.

Its function is as follows. Forms part of the ribosomal stalk which helps the ribosome interact with GTP-bound translation factors. This chain is Large ribosomal subunit protein uL11, found in Prochlorococcus marinus (strain MIT 9313).